A 735-amino-acid chain; its full sequence is Protein STRUBBELIG-RECEPTOR FAMILY 2 (735 aa).

Residues 1-23 (MKTKQQLRFLATILLTTILFVLA) form the signal peptide. Over 24 to 297 (KTDTDPLEVL…KKKKKGIGAG (274 aa)) the chain is Extracellular. LRR repeat units lie at residues 78–94 (LREL…LQHL), 96–119 (NLKI…PPNA), 120–140 (THIN…LPLM), 142–163 (SLQS…VFSG), 165–187 (QIKE…FGTL), 189–211 (NLTS…ADLP), 212–232 (LADL…HFQS), and 233–253 (IPHL…KPWK). Residues asparagine 118, asparagine 128, asparagine 147, asparagine 175, and asparagine 189 are each glycosylated (N-linked (GlcNAc...) asparagine). The N-linked (GlcNAc...) asparagine glycan is linked to asparagine 264. A helical membrane pass occupies residues 298–318 (STFLLVGGLALLGTFFALFAV). At 319-735 (RMNHRRAQNL…SSPTFSYLSS (417 aa)) the chain is on the cytoplasmic side. Positions 358–378 (PQIKRFQPPPAPQLRHLPSPP) are disordered. A Protein kinase domain is found at 415-695 (FSEENLLGEG…EIVEALTALI (281 aa)).

This sequence belongs to the protein kinase superfamily. Ser/Thr protein kinase family. In terms of tissue distribution, expressed in seedlings, roots, stems, leaves, flowers and siliques.

Its subcellular location is the membrane. This chain is Protein STRUBBELIG-RECEPTOR FAMILY 2 (SRF2), found in Arabidopsis thaliana (Mouse-ear cress).